The primary structure comprises 176 residues: HTH-type transcriptional regulator DctR (176 aa).

Residues 109 to 174 (VPEADVSLSR…ELVRHQHINY (66 aa)) form the HTH luxR-type domain. A DNA-binding region (H-T-H motif) is located at residues 133 to 152 (TEDILEKLKISLKTFYCHKH).

Its function is as follows. May act as a transcriptional regulator of dctA. The sequence is that of HTH-type transcriptional regulator DctR (dctR) from Escherichia coli O6:H1 (strain CFT073 / ATCC 700928 / UPEC).